Consider the following 747-residue polypeptide: Threonine synthase-like 1 (747 aa).

Residue Lys-351 is modified to N6-(pyridoxal phosphate)lysine.

It belongs to the threonine synthase family. It depends on pyridoxal 5'-phosphate as a cofactor.

The sequence is that of Threonine synthase-like 1 (Thnsl1) from Mus musculus (Mouse).